The following is a 434-amino-acid chain: Mitochondrial distribution and morphology protein 12 (434 aa).

The 434-residue stretch at 1-434 (MSIDIDWERA…VYPSFWTFLV (434 aa)) folds into the SMP-LTD domain. Residues 70–83 (YEEDDNENFSESSE) show a composition bias toward acidic residues. 2 disordered regions span residues 70–141 (YEED…LRSP) and 181–277 (TPLG…LPPR). The span at 86–97 (SPTREPVDRYGS) shows a compositional bias: basic and acidic residues. Residues 215–237 (SAQSRPSTANTGNTLLSRGSMSS) show a composition bias toward polar residues.

Belongs to the MDM12 family. In terms of assembly, component of the ER-mitochondria encounter structure (ERMES) or MDM complex, composed of MMM1, MDM10, MDM12 and MDM34. An MMM1 homodimer associates with one molecule of MDM12 on each side in a pairwise head-to-tail manner, and the SMP-LTD domains of MMM1 and MDM12 generate a continuous hydrophobic tunnel for phospholipid trafficking.

The protein resides in the mitochondrion outer membrane. It localises to the endoplasmic reticulum membrane. Its function is as follows. Component of the ERMES/MDM complex, which serves as a molecular tether to connect the endoplasmic reticulum (ER) and mitochondria. Components of this complex are involved in the control of mitochondrial shape and protein biogenesis, and function in nonvesicular lipid trafficking between the ER and mitochondria. MDM12 is required for the interaction of the ER-resident membrane protein MMM1 and the outer mitochondrial membrane-resident beta-barrel protein MDM10. The MDM12-MMM1 subcomplex functions in the major beta-barrel assembly pathway that is responsible for biogenesis of all mitochondrial outer membrane beta-barrel proteins, and acts in a late step after the SAM complex. The MDM10-MDM12-MMM1 subcomplex further acts in the TOM40-specific pathway after the action of the MDM12-MMM1 complex. Essential for establishing and maintaining the structure of mitochondria and maintenance of mtDNA nucleoids. The sequence is that of Mitochondrial distribution and morphology protein 12 from Ajellomyces dermatitidis (strain ER-3 / ATCC MYA-2586) (Blastomyces dermatitidis).